The primary structure comprises 536 residues: Quinate permease (536 aa).

Residues 1–26 lie on the Cytoplasmic side of the membrane; the sequence is MTLLALKEDRPTPKAVYNWRVYTCAA. A helical membrane pass occupies residues 27 to 47; it reads IASFASCMIGYDSSFIGTTLA. The Extracellular segment spans residues 48–74; it reads LPSFTKEFDFASYTPGALALLQSNIVS. A helical transmembrane segment spans residues 75 to 95; that stretch reads VYQAGAFFGSLFAFATSYFLG. Over 96–98 the chain is Cytoplasmic; the sequence is RRR. A helical transmembrane segment spans residues 99 to 119; that stretch reads SLIAFSVVFIIGAAIMLAADG. Residues 120-131 lie on the Extracellular side of the membrane; that stretch reads QRRGVDPIIAGR. The helical transmembrane segment at 132–152 threads the bilayer; that stretch reads VLAGIGVGGASNMVPIYISEL. At 153–160 the chain is on the cytoplasmic side; it reads APPAVRGR. The helical transmembrane segment at 161-181 threads the bilayer; the sequence is LVGIYELGWQIGGLVGFWINY. At 182 to 195 the chain is on the extracellular side; sequence GVNTTMAPTRSQWL. Asn-184 is a glycosylation site (N-linked (GlcNAc...) asparagine). Residues 196–216 form a helical membrane-spanning segment; the sequence is IPFAVQLIPAGLLFLGSFWIP. At 217–285 the chain is on the cytoplasmic side; it reads ESPRWLFANG…SLKQPKVRWR (69 aa). The helical transmembrane segment at 286–306 threads the bilayer; that stretch reads FFLGGMLFLWQNGSGINAINY. Residues 307-327 are Extracellular-facing; sequence YSPTVFRSIGITGTNTGFLTT. Residues 328 to 349 form a helical membrane-spanning segment; it reads GIFGVVKMVLTIIWLLWLVDLV. The Cytoplasmic segment spans residues 350–352; sequence GRR. A helical transmembrane segment spans residues 353 to 373; that stretch reads RILFVGATGGSLCMWFIGAYI. The Extracellular portion of the chain corresponds to 374-389; sequence KIAGPGTTKTEEAKLT. A helical membrane pass occupies residues 390–410; sequence SGGIAAIFFFYLWTAFYTPSW. Topologically, residues 411-435 are cytoplasmic; that stretch reads NGTPWVINSEMFDQNTRSLGQASAA. Residues 436-456 form a helical membrane-spanning segment; sequence ANNWFWNFIISRFTPQMFIKM. The Extracellular segment spans residues 457–458; sequence EY. Residues 459–479 form a helical membrane-spanning segment; the sequence is GVYFFFASLMLLSVVFIYFFI. Residues 480–536 are Cytoplasmic-facing; the sequence is PETKSIPLEAMDRLFAIKSVHNANKILMDELNFDRNPEREQSSLDEKDRVTQTENAV. Positions 516–530 are enriched in basic and acidic residues; that stretch reads PEREQSSLDEKDRVT. Residues 516–536 form a disordered region; sequence PEREQSSLDEKDRVTQTENAV.

It belongs to the major facilitator superfamily. Sugar transporter (TC 2.A.1.1) family.

The protein resides in the membrane. The polypeptide is Quinate permease (qa-y) (Neurospora africana).